The chain runs to 93 residues: Acylphosphatase (93 aa).

A disulfide bridge links Cys-5 with Cys-49. Positions 5–93 (CIIAWVYGRV…ETLTGFSIRY (89 aa)) constitute an Acylphosphatase-like domain. Asn-38 is a catalytic residue.

It belongs to the acylphosphatase family.

The catalysed reaction is an acyl phosphate + H2O = a carboxylate + phosphate + H(+). The protein is Acylphosphatase of Salmonella paratyphi A (strain ATCC 9150 / SARB42).